The chain runs to 90 residues: Large ribosomal subunit protein eL37 (90 aa).

Residues C19, C22, C34, and C37 each contribute to the Zn(2+) site. The segment at 19-37 (CRRCGRQSYHKQKNSCSSC) adopts a C4-type zinc-finger fold. Residues 21–31 (RCGRQSYHKQK) show a composition bias toward basic residues. Residues 21-59 (RCGRQSYHKQKNSCSSCGYPNPKMRNPGSIKARRRRTIG) form a disordered region.

The protein belongs to the eukaryotic ribosomal protein eL37 family. Zn(2+) serves as cofactor.

In terms of biological role, binds to the 23S rRNA. This is Large ribosomal subunit protein eL37 (RPL37) from Encephalitozoon cuniculi (strain GB-M1) (Microsporidian parasite).